The chain runs to 431 residues: Acyl transferase 8 (431 aa).

His-169 acts as the Proton acceptor in catalysis. 3 disordered regions span residues 220-247, 260-313, and 331-400; these read VADA…RAPA, HHAG…DHLR, and GLRV…PPPT. Low complexity predominate over residues 224 to 234; the sequence is RGGVRPGVPRP. Positions 264–273 are enriched in gly residues; the sequence is DGGGGGGGGR. 2 stretches are compositionally biased toward basic residues: residues 297-306 and 335-380; these read ERRRRRRRGR and GRPR…RRLP. The segment covering 381–394 has biased composition (basic and acidic residues); the sequence is QRHDAPRLITERAH.

Belongs to the plant acyltransferase family.

Functionally, involved in the incorporation of ferulate into the cell wall. May act as arabinoxylan feruloyl transferase. The polypeptide is Acyl transferase 8 (Oryza sativa subsp. japonica (Rice)).